A 379-amino-acid chain; its full sequence is Chaperone protein DnaJ (379 aa).

The J domain occupies 5–70 (DYYEILGLDK…QKKAQYDQFG (66 aa)). The segment at 135-217 (GVEKEISVTR…CRGKGIVRKH (83 aa)) adopts a CR-type zinc-finger fold. Zn(2+) is bound by residues Cys-148, Cys-151, Cys-165, Cys-168, Cys-191, Cys-194, Cys-205, and Cys-208. CXXCXGXG motif repeat units lie at residues 148–155 (CETCNGTG), 165–172 (CDKCNGTG), 191–198 (CDKCGGRG), and 205–212 (CEECRGKG).

It belongs to the DnaJ family. As to quaternary structure, homodimer. Zn(2+) is required as a cofactor.

It localises to the cytoplasm. Its function is as follows. Participates actively in the response to hyperosmotic and heat shock by preventing the aggregation of stress-denatured proteins and by disaggregating proteins, also in an autonomous, DnaK-independent fashion. Unfolded proteins bind initially to DnaJ; upon interaction with the DnaJ-bound protein, DnaK hydrolyzes its bound ATP, resulting in the formation of a stable complex. GrpE releases ADP from DnaK; ATP binding to DnaK triggers the release of the substrate protein, thus completing the reaction cycle. Several rounds of ATP-dependent interactions between DnaJ, DnaK and GrpE are required for fully efficient folding. Also involved, together with DnaK and GrpE, in the DNA replication of plasmids through activation of initiation proteins. This chain is Chaperone protein DnaJ, found in Clostridium kluyveri (strain ATCC 8527 / DSM 555 / NBRC 12016 / NCIMB 10680 / K1).